The following is a 391-amino-acid chain: Chalcone synthase 2 (391 aa).

Residue Cys164 is part of the active site.

It belongs to the thiolase-like superfamily. Chalcone/stilbene synthases family.

It catalyses the reaction (E)-4-coumaroyl-CoA + 3 malonyl-CoA + 3 H(+) = 2',4,4',6'-tetrahydroxychalcone + 3 CO2 + 4 CoA. It participates in secondary metabolite biosynthesis; flavonoid biosynthesis. Functionally, the primary product of this enzyme is 4,2',4',6'-tetrahydroxychalcone (also termed naringenin-chalcone or chalcone) which can under specific conditions spontaneously isomerize into naringenin. The protein is Chalcone synthase 2 (CHS2) of Citrus sinensis (Sweet orange).